A 178-amino-acid chain; its full sequence is Cell division protein ZapC (178 aa).

It belongs to the ZapC family. Interacts directly with FtsZ.

It is found in the cytoplasm. In terms of biological role, contributes to the efficiency of the cell division process by stabilizing the polymeric form of the cell division protein FtsZ. Acts by promoting interactions between FtsZ protofilaments and suppressing the GTPase activity of FtsZ. This chain is Cell division protein ZapC, found in Aeromonas hydrophila subsp. hydrophila (strain ATCC 7966 / DSM 30187 / BCRC 13018 / CCUG 14551 / JCM 1027 / KCTC 2358 / NCIMB 9240 / NCTC 8049).